The following is a 201-amino-acid chain: Protein OPI10 homolog (201 aa).

Belongs to the OPI10 family.

This is Protein OPI10 homolog from Anopheles gambiae (African malaria mosquito).